Consider the following 229-residue polypeptide: Ribose-5-phosphate isomerase A (229 aa).

Substrate is bound by residues 28 to 31 (TGST), 85 to 88 (DGAD), and 98 to 101 (KGRG). E107 acts as the Proton acceptor in catalysis. Substrate is bound at residue K125.

It belongs to the ribose 5-phosphate isomerase family. Homodimer.

The catalysed reaction is aldehydo-D-ribose 5-phosphate = D-ribulose 5-phosphate. It functions in the pathway carbohydrate degradation; pentose phosphate pathway; D-ribose 5-phosphate from D-ribulose 5-phosphate (non-oxidative stage): step 1/1. Catalyzes the reversible conversion of ribose-5-phosphate to ribulose 5-phosphate. The polypeptide is Ribose-5-phosphate isomerase A (Pyrococcus abyssi (strain GE5 / Orsay)).